Here is a 174-residue protein sequence, read N- to C-terminus: Large ribosomal subunit protein uL10 (174 aa).

Belongs to the universal ribosomal protein uL10 family. Part of the ribosomal stalk of the 50S ribosomal subunit. The N-terminus interacts with L11 and the large rRNA to form the base of the stalk. The C-terminus forms an elongated spine to which L12 dimers bind in a sequential fashion forming a multimeric L10(L12)X complex.

Functionally, forms part of the ribosomal stalk, playing a central role in the interaction of the ribosome with GTP-bound translation factors. This chain is Large ribosomal subunit protein uL10, found in Anaeromyxobacter dehalogenans (strain 2CP-C).